The sequence spans 525 residues: Nuclear pore glycoprotein p62 (525 aa).

N-acetylserine is present on Ser2. 5 repeat units span residues 6–7 (FG), 46–47 (FG), 78–79 (FG), 115–116 (FG), and 143–144 (FG). Residues 6 to 144 (FGGTGAPAGG…GTAPTGFVFG (139 aa)) form a 5 X 2 AA repeats of F-G region. Residues 260 to 293 (LKAPGAAPGASTTSTTTTTTTTTTTASTSSSTTT) are disordered. A compositionally biased stretch (low complexity) spans 269–293 (ASTTSTTTTTTTTTTTASTSSSTTT). Positions 331–461 (MTYAQLESLI…QDLKDIIEHL (131 aa)) are required for centrosome localization. The stretch at 331-461 (MTYAQLESLI…QDLKDIIEHL (131 aa)) forms a coiled coil. Ser411 and Ser421 each carry phosphoserine. O-linked (GlcNAc) serine glycosylation occurs at Ser471.

This sequence belongs to the nucleoporin NSP1/NUP62 family. In terms of assembly, component of the p62 complex, a complex at least composed of NUP62, NUP54, and NUP58. Interacts with NUP88. Interacts with NUTF2. Interacts with HIKESHI. Interacts with OSBPL8. Interacts with CAPG. Interacts with SAS6 and TUBG1 at the centrosome. Interacts with MCM3AP. In terms of processing, the inner channel of the NPC has a different redox environment from the cytoplasm and allows the formation of interchain disulfide bonds between some nucleoporins, the significant increase of these linkages upon oxidative stress reduces the permeability of the NPC.

It is found in the nucleus. The protein resides in the nuclear pore complex. Its subcellular location is the cytoplasm. It localises to the cytoskeleton. The protein localises to the spindle pole. It is found in the nucleus envelope. The protein resides in the microtubule organizing center. Its subcellular location is the centrosome. Its function is as follows. Essential component of the nuclear pore complex. The N-terminal is probably involved in nucleocytoplasmic transport. The C-terminal is involved in protein-protein interaction probably via coiled-coil formation, promotes its association with centrosomes and may function in anchorage of p62 to the pore complex. Plays a role in mitotic cell cycle progression by regulating centrosome segregation, centriole maturation and spindle orientation. It might be involved in protein recruitment to the centrosome after nuclear breakdown. The polypeptide is Nuclear pore glycoprotein p62 (Nup62) (Rattus norvegicus (Rat)).